A 265-amino-acid chain; its full sequence is 3-methyl-2-oxobutanoate hydroxymethyltransferase (265 aa).

Residues D45 and D84 each contribute to the Mg(2+) site. Residues 45–46 (DS), D84, and K112 each bind 3-methyl-2-oxobutanoate. E114 contacts Mg(2+). The active-site Proton acceptor is E181.

This sequence belongs to the PanB family. As to quaternary structure, homodecamer; pentamer of dimers. The cofactor is Mg(2+).

It is found in the cytoplasm. It carries out the reaction 3-methyl-2-oxobutanoate + (6R)-5,10-methylene-5,6,7,8-tetrahydrofolate + H2O = 2-dehydropantoate + (6S)-5,6,7,8-tetrahydrofolate. The protein operates within cofactor biosynthesis; (R)-pantothenate biosynthesis; (R)-pantoate from 3-methyl-2-oxobutanoate: step 1/2. Functionally, catalyzes the reversible reaction in which hydroxymethyl group from 5,10-methylenetetrahydrofolate is transferred onto alpha-ketoisovalerate to form ketopantoate. This Yersinia pseudotuberculosis serotype IB (strain PB1/+) protein is 3-methyl-2-oxobutanoate hydroxymethyltransferase.